Reading from the N-terminus, the 225-residue chain is PKHD-type hydroxylase YbiX (225 aa).

Residues 78–177 form the Fe2OG dioxygenase domain; sequence TLSTPLFNRY…RVASFMWIQS (100 aa). The Fe cation site is built by H96, D98, and H158. R168 is a binding site for 2-oxoglutarate.

It depends on Fe(2+) as a cofactor. The cofactor is L-ascorbate.

This chain is PKHD-type hydroxylase YbiX, found in Escherichia coli O8 (strain IAI1).